Reading from the N-terminus, the 315-residue chain is Tyrosine recombinase XerC (315 aa).

In terms of domain architecture, Core-binding (CB) spans 14-105; that stretch reads PDLLNERQSW…GLRSLLHHLQ (92 aa). A Tyr recombinase domain is found at 126–309; the sequence is SLPKPLTDRQ…DTARLLEIYD (184 aa). Catalysis depends on residues arginine 169, lysine 193, histidine 261, arginine 264, and histidine 287. Residue tyrosine 296 is the O-(3'-phospho-DNA)-tyrosine intermediate of the active site.

This sequence belongs to the 'phage' integrase family. XerC subfamily. Forms a cyclic heterotetrameric complex composed of two molecules of XerC and two molecules of XerD.

The protein resides in the cytoplasm. Functionally, site-specific tyrosine recombinase, which acts by catalyzing the cutting and rejoining of the recombining DNA molecules. The XerC-XerD complex is essential to convert dimers of the bacterial chromosome into monomers to permit their segregation at cell division. It also contributes to the segregational stability of plasmids. This is Tyrosine recombinase XerC from Agrobacterium fabrum (strain C58 / ATCC 33970) (Agrobacterium tumefaciens (strain C58)).